Consider the following 342-residue polypeptide: Transmembrane protein 115 homolog (342 aa).

Residues 1–21 (MQYSSRFLELNIPDSFLNINK) lie on the Cytoplasmic side of the membrane. The chain crosses the membrane as a helical span at residues 22–42 (IPDATKFITVTYICLTATLFC). Residues 43-121 (IRRSLYNKLV…NWNSSKEMFK (79 aa)) lie on the Lumenal side of the membrane. An N-linked (GlcNAc...) asparagine glycan is attached at Asn-114. Residues 122–142 (FIIVLGSLTNVLIIMLTLLVS) traverse the membrane as a helical segment. Topologically, residues 143 to 159 (FFSNKVRLDIPLDGNYT) are cytoplasmic. Residues 160-180 (ILIGFPIIYRQLLPETTIIHL) traverse the membrane as a helical segment. The Lumenal segment spans residues 181 to 207 (KTPQFLAKNFRFKLLPIFVMFTMTVTQ). A helical transmembrane segment spans residues 208–228 (IIWFHHFAQLFSIWVTFFASW). Residues 229 to 342 (SYLRFFQKLA…QVLEERMVNP (114 aa)) lie on the Cytoplasmic side of the membrane.

This sequence belongs to the TMEM115 family. In terms of assembly, homooligomer.

Its subcellular location is the golgi apparatus membrane. Functionally, may play a role in retrograde transport of proteins from the Golgi to the endoplasmic reticulum. The chain is Transmembrane protein 115 homolog from Saccharomyces cerevisiae (strain ATCC 204508 / S288c) (Baker's yeast).